Reading from the N-terminus, the 485-residue chain is Glutamyl-tRNA(Gln) amidotransferase subunit A (485 aa).

Residues Lys-78 and Ser-153 each act as charge relay system in the active site. The active-site Acyl-ester intermediate is the Ser-177.

It belongs to the amidase family. GatA subfamily. In terms of assembly, heterotrimer of A, B and C subunits.

The catalysed reaction is L-glutamyl-tRNA(Gln) + L-glutamine + ATP + H2O = L-glutaminyl-tRNA(Gln) + L-glutamate + ADP + phosphate + H(+). In terms of biological role, allows the formation of correctly charged Gln-tRNA(Gln) through the transamidation of misacylated Glu-tRNA(Gln) in organisms which lack glutaminyl-tRNA synthetase. The reaction takes place in the presence of glutamine and ATP through an activated gamma-phospho-Glu-tRNA(Gln). The chain is Glutamyl-tRNA(Gln) amidotransferase subunit A from Syntrophus aciditrophicus (strain SB).